The chain runs to 261 residues: 6-phosphogluconolactonase (261 aa).

Belongs to the glucosamine/galactosamine-6-phosphate isomerase family. 6-phosphogluconolactonase subfamily.

It catalyses the reaction 6-phospho-D-glucono-1,5-lactone + H2O = 6-phospho-D-gluconate + H(+). The protein operates within carbohydrate degradation; pentose phosphate pathway; D-ribulose 5-phosphate from D-glucose 6-phosphate (oxidative stage): step 2/3. In terms of biological role, hydrolysis of 6-phosphogluconolactone to 6-phosphogluconate. This Streptomyces coelicolor (strain ATCC BAA-471 / A3(2) / M145) protein is 6-phosphogluconolactonase (pgl).